Consider the following 245-residue polypeptide: 5-oxoprolinase subunit A (245 aa).

It belongs to the LamB/PxpA family. As to quaternary structure, forms a complex composed of PxpA, PxpB and PxpC.

The enzyme catalyses 5-oxo-L-proline + ATP + 2 H2O = L-glutamate + ADP + phosphate + H(+). In terms of biological role, catalyzes the cleavage of 5-oxoproline to form L-glutamate coupled to the hydrolysis of ATP to ADP and inorganic phosphate. This is 5-oxoprolinase subunit A from Yersinia enterocolitica serotype O:8 / biotype 1B (strain NCTC 13174 / 8081).